The primary structure comprises 113 residues: Cytochrome c (113 aa).

A1 carries the post-translational modification N-acetylalanine. C22, C25, and H26 together coordinate heme c. N6,N6,N6-trimethyllysine is present on K80. M88 lines the heme c pocket. K94 bears the N6,N6,N6-trimethyllysine mark.

Belongs to the cytochrome c family. Binds 1 heme c group covalently per subunit.

The protein localises to the mitochondrion intermembrane space. Functionally, electron carrier protein. The oxidized form of the cytochrome c heme group can accept an electron from the heme group of the cytochrome c1 subunit of cytochrome reductase. Cytochrome c then transfers this electron to the cytochrome oxidase complex, the final protein carrier in the mitochondrial electron-transport chain. The sequence is that of Cytochrome c from Ginkgo biloba (Ginkgo).